Consider the following 236-residue polypeptide: Phosphoribosylaminoimidazole-succinocarboxamide synthase (236 aa).

This sequence belongs to the SAICAR synthetase family.

The catalysed reaction is 5-amino-1-(5-phospho-D-ribosyl)imidazole-4-carboxylate + L-aspartate + ATP = (2S)-2-[5-amino-1-(5-phospho-beta-D-ribosyl)imidazole-4-carboxamido]succinate + ADP + phosphate + 2 H(+). The protein operates within purine metabolism; IMP biosynthesis via de novo pathway; 5-amino-1-(5-phospho-D-ribosyl)imidazole-4-carboxamide from 5-amino-1-(5-phospho-D-ribosyl)imidazole-4-carboxylate: step 1/2. This chain is Phosphoribosylaminoimidazole-succinocarboxamide synthase, found in Rickettsia canadensis (strain McKiel).